Here is a 319-residue protein sequence, read N- to C-terminus: Malate dehydrogenase (319 aa).

Residues 7-13 (GAAGGIG) and D34 contribute to the NAD(+) site. The substrate site is built by R81 and R87. NAD(+)-binding positions include N94 and 117–119 (ITN). Residues N119 and R153 each contribute to the substrate site. The Proton acceptor role is filled by H177. M227 contacts NAD(+).

The protein belongs to the LDH/MDH superfamily. MDH type 1 family. In terms of assembly, homodimer.

It catalyses the reaction (S)-malate + NAD(+) = oxaloacetate + NADH + H(+). Its function is as follows. Catalyzes the reversible oxidation of malate to oxaloacetate. The polypeptide is Malate dehydrogenase (Psychromonas ingrahamii (strain DSM 17664 / CCUG 51855 / 37)).